Reading from the N-terminus, the 337-residue chain is ATP-dependent (S)-NAD(P)H-hydrate dehydratase (337 aa).

Serine 6 bears the Phosphoserine mark. A YjeF C-terminal domain is found at 11–335 (IKLAQKRCIP…DRVGEVFAKL (325 aa)). (6S)-NADPHX contacts are provided by residues glycine 121 and 182–188 (NVVEFKR). ATP is bound by residues 218–222 (KGQSD) and 240–249 (GSNKRVGGQG). The tract at residues 224-246 (IFSPDSEKDMLTNSEEGSNKRVG) is disordered. Position 250 (aspartate 250) interacts with (6S)-NADPHX.

It belongs to the NnrD/CARKD family. Mg(2+) is required as a cofactor.

The protein localises to the cytoplasm. The catalysed reaction is (6S)-NADHX + ATP = ADP + phosphate + NADH + H(+). It catalyses the reaction (6S)-NADPHX + ATP = ADP + phosphate + NADPH + H(+). Catalyzes the dehydration of the S-form of NAD(P)HX at the expense of ATP, which is converted to ADP. Together with NAD(P)HX epimerase, which catalyzes the epimerization of the S- and R-forms, the enzyme allows the repair of both epimers of NAD(P)HX, a damaged form of NAD(P)H that is a result of enzymatic or heat-dependent hydration. This is ATP-dependent (S)-NAD(P)H-hydrate dehydratase from Saccharomyces cerevisiae (strain ATCC 204508 / S288c) (Baker's yeast).